A 360-amino-acid polypeptide reads, in one-letter code: DNA replication and repair protein RecF (360 aa).

33-40 is an ATP binding site; sequence GENGSGKT.

It belongs to the RecF family.

It is found in the cytoplasm. In terms of biological role, the RecF protein is involved in DNA metabolism; it is required for DNA replication and normal SOS inducibility. RecF binds preferentially to single-stranded, linear DNA. It also seems to bind ATP. This chain is DNA replication and repair protein RecF, found in Rickettsia akari (strain Hartford).